A 436-amino-acid polypeptide reads, in one-letter code: Cytokine receptor-like factor 3 (436 aa).

Positions 9–87 form a coiled coil; that stretch reads LMQEAWESID…VSAIEQENIK (79 aa). Residues 177–270 enclose the Fibronectin type-III domain; sequence PPVQIEELIE…LQTSRTTLVP (94 aa).

This sequence belongs to the cytokine receptor-like factor 3 family.

It localises to the cytoplasm. Its function is as follows. May play a role in the negative regulation of cell cycle progression. This chain is Cytokine receptor-like factor 3 (crlf3), found in Xenopus laevis (African clawed frog).